A 560-amino-acid polypeptide reads, in one-letter code: Putative transport protein VFMJ11_0927 (560 aa).

5 helical membrane-spanning segments follow: residues 8-28 (LLSQ…LFIA), 37-57 (LGSS…GYTF), 66-86 (FMLF…GIFL), 94-114 (LLVL…GHYF), and 161-181 (NLSV…ILLA). RCK C-terminal domains follow at residues 203–292 (RGIG…FRNG) and 293–376 (KEVF…KIGF). The next 5 helical transmembrane spans lie at 386-406 (LLAF…TMSF), 409-429 (VTFG…LGFL), 451-471 (GLLV…NEYF), 478-498 (VLAA…LVGA), and 539-559 (AGTY…MILL).

It belongs to the AAE transporter (TC 2.A.81) family. YbjL subfamily.

It localises to the cell membrane. The protein is Putative transport protein VFMJ11_0927 of Aliivibrio fischeri (strain MJ11) (Vibrio fischeri).